Here is a 263-residue protein sequence, read N- to C-terminus: 3-deoxy-manno-octulosonate cytidylyltransferase 1 (263 aa).

Belongs to the KdsB family.

It localises to the cytoplasm. The enzyme catalyses 3-deoxy-alpha-D-manno-oct-2-ulosonate + CTP = CMP-3-deoxy-beta-D-manno-octulosonate + diphosphate. The protein operates within nucleotide-sugar biosynthesis; CMP-3-deoxy-D-manno-octulosonate biosynthesis; CMP-3-deoxy-D-manno-octulosonate from 3-deoxy-D-manno-octulosonate and CTP: step 1/1. Its pathway is bacterial outer membrane biogenesis; lipopolysaccharide biosynthesis. Its function is as follows. Activates KDO (a required 8-carbon sugar) for incorporation into bacterial lipopolysaccharide in Gram-negative bacteria. This Burkholderia ambifaria (strain MC40-6) protein is 3-deoxy-manno-octulosonate cytidylyltransferase 1.